Reading from the N-terminus, the 509-residue chain is ATP synthase subunit alpha (509 aa).

169 to 176 lines the ATP pocket; the sequence is GDRQTGKT.

This sequence belongs to the ATPase alpha/beta chains family. F-type ATPases have 2 components, CF(1) - the catalytic core - and CF(0) - the membrane proton channel. CF(1) has five subunits: alpha(3), beta(3), gamma(1), delta(1), epsilon(1). CF(0) has three main subunits: a(1), b(2) and c(9-12). The alpha and beta chains form an alternating ring which encloses part of the gamma chain. CF(1) is attached to CF(0) by a central stalk formed by the gamma and epsilon chains, while a peripheral stalk is formed by the delta and b chains.

It localises to the cell inner membrane. The catalysed reaction is ATP + H2O + 4 H(+)(in) = ADP + phosphate + 5 H(+)(out). Produces ATP from ADP in the presence of a proton gradient across the membrane. The alpha chain is a regulatory subunit. The sequence is that of ATP synthase subunit alpha from Zymomonas mobilis subsp. mobilis (strain ATCC 31821 / ZM4 / CP4).